Consider the following 460-residue polypeptide: Elongation factor 1-alpha 3 (460 aa).

Positions 6–243 (KTHINIVVIG…DCIIPPQRPT (238 aa)) constitute a tr-type G domain. The G1 stretch occupies residues 15 to 22 (GHVDSGKS). The segment at 71-75 (GITID) is G2. The G3 stretch occupies residues 92–95 (DAPG). Positions 154-157 (NKMD) are G4. Residues 195–197 (SGF) form a G5 region. Glu-302 and Glu-375 each carry 5-glutamyl glycerylphosphorylethanolamine.

It belongs to the TRAFAC class translation factor GTPase superfamily. Classic translation factor GTPase family. EF-Tu/EF-1A subfamily.

It localises to the cytoplasm. This protein promotes the GTP-dependent binding of aminoacyl-tRNA to the A-site of ribosomes during protein biosynthesis. This chain is Elongation factor 1-alpha 3 (eft-3), found in Oscheius tipulae.